Here is a 367-residue protein sequence, read N- to C-terminus: D-alanine--D-alanine ligase (367 aa).

The 202-residue stretch at 139 to 340 (KLILKEKNIP…FSQVIDNMIS (202 aa)) folds into the ATP-grasp domain. Residue 169-224 (KEVLEYPMIVKPARLGSSIGVKKVNDKCELEEAIETAFSFDDKVIVEKWIDSRELN) coordinates ATP. Mg(2+) contacts are provided by D298, E311, and N313.

Belongs to the D-alanine--D-alanine ligase family. Requires Mg(2+) as cofactor. Mn(2+) is required as a cofactor.

It localises to the cytoplasm. It catalyses the reaction 2 D-alanine + ATP = D-alanyl-D-alanine + ADP + phosphate + H(+). The protein operates within cell wall biogenesis; peptidoglycan biosynthesis. In terms of biological role, cell wall formation. The protein is D-alanine--D-alanine ligase of Thermosipho africanus (strain TCF52B).